A 199-amino-acid polypeptide reads, in one-letter code: dITP/XTP pyrophosphatase (199 aa).

Substrate is bound at residue 7 to 12; it reads SNNRGK. Asp68 acts as the Proton acceptor in catalysis. A Mg(2+)-binding site is contributed by Asp68. Substrate-binding positions include Ala69, 154–157, Lys177, and 182–183; these read FGFD and HR.

It belongs to the HAM1 NTPase family. In terms of assembly, homodimer. Requires Mg(2+) as cofactor.

It carries out the reaction XTP + H2O = XMP + diphosphate + H(+). It catalyses the reaction dITP + H2O = dIMP + diphosphate + H(+). The enzyme catalyses ITP + H2O = IMP + diphosphate + H(+). Its function is as follows. Pyrophosphatase that catalyzes the hydrolysis of nucleoside triphosphates to their monophosphate derivatives, with a high preference for the non-canonical purine nucleotides XTP (xanthosine triphosphate), dITP (deoxyinosine triphosphate) and ITP. Seems to function as a house-cleaning enzyme that removes non-canonical purine nucleotides from the nucleotide pool, thus preventing their incorporation into DNA/RNA and avoiding chromosomal lesions. This chain is dITP/XTP pyrophosphatase, found in Albidiferax ferrireducens (strain ATCC BAA-621 / DSM 15236 / T118) (Rhodoferax ferrireducens).